We begin with the raw amino-acid sequence, 430 residues long: Adenylosuccinate synthetase (430 aa).

GTP-binding positions include 13 to 19 (GDEGKGK) and 41 to 43 (GHT). The Proton acceptor role is filled by aspartate 14. The Mg(2+) site is built by aspartate 14 and glycine 41. IMP-binding positions include 14-17 (DEGK), 39-42 (NAGH), threonine 130, arginine 144, glutamine 225, threonine 240, and arginine 304. The Proton donor role is filled by histidine 42. 300–306 (ASTGRPR) is a substrate binding site. GTP contacts are provided by residues arginine 306, 332 to 334 (KLD), and 414 to 416 (STG).

The protein belongs to the adenylosuccinate synthetase family. As to quaternary structure, homodimer. Mg(2+) is required as a cofactor.

It is found in the cytoplasm. The catalysed reaction is IMP + L-aspartate + GTP = N(6)-(1,2-dicarboxyethyl)-AMP + GDP + phosphate + 2 H(+). It participates in purine metabolism; AMP biosynthesis via de novo pathway; AMP from IMP: step 1/2. In terms of biological role, plays an important role in the de novo pathway of purine nucleotide biosynthesis. Catalyzes the first committed step in the biosynthesis of AMP from IMP. This Xanthomonas oryzae pv. oryzae (strain PXO99A) protein is Adenylosuccinate synthetase.